A 558-amino-acid polypeptide reads, in one-letter code: Urocanate hydratase (558 aa).

Residues 54-55 (GG), glutamine 132, 178-180 (GMG), glutamate 198, 244-245 (NA), 265-269 (QTSAH), 275-276 (YL), and tyrosine 324 each bind NAD(+). Residue cysteine 412 is part of the active site. Glycine 494 serves as a coordination point for NAD(+).

It belongs to the urocanase family. NAD(+) is required as a cofactor.

The protein resides in the cytoplasm. The enzyme catalyses 4-imidazolone-5-propanoate = trans-urocanate + H2O. The protein operates within amino-acid degradation; L-histidine degradation into L-glutamate; N-formimidoyl-L-glutamate from L-histidine: step 2/3. Its function is as follows. Catalyzes the conversion of urocanate to 4-imidazolone-5-propionate. This Acinetobacter baumannii (strain SDF) protein is Urocanate hydratase.